The chain runs to 348 residues: MNRTDELRTARIESLVTPAELALRYPVTPGVATHVTDSRRRIEKILNGEDKRLLVIIGPCSIHDLTAAMEYATRLQSLRNQYQSRLEIVMRTYFEKPRTVVGWKGLISDPDLNGSYRINHGLELARKLLLQVNELGVPTATEFLDMVTGQFIADLISWGAIGARTTESQIHREMASALSCPVGFKNGTDGNTRIAVDAIRAARASHMFLSPDKNGQMTIYQTSGNPYGHIIMRGGKKPNYHADDIAAACDTLHEFDLPEHLVVDFSHGNCQKQHRRQLEVCEDICQQIRNGSTAIAGIMAESFLREGTQKIVGGQPLTYGQSITDPCLGWEDTERLVEKLASAVDTRF.

Belongs to the class-I DAHP synthase family.

The enzyme catalyses D-erythrose 4-phosphate + phosphoenolpyruvate + H2O = 7-phospho-2-dehydro-3-deoxy-D-arabino-heptonate + phosphate. It functions in the pathway metabolic intermediate biosynthesis; chorismate biosynthesis; chorismate from D-erythrose 4-phosphate and phosphoenolpyruvate: step 1/7. Stereospecific condensation of phosphoenolpyruvate (PEP) and D-erythrose-4-phosphate (E4P) giving rise to 3-deoxy-D-arabino-heptulosonate-7-phosphate (DAHP). This Escherichia coli O157:H7 protein is Phospho-2-dehydro-3-deoxyheptonate aldolase, Trp-sensitive (aroH).